We begin with the raw amino-acid sequence, 196 residues long: 7-methyl-GTP pyrophosphatase (196 aa).

Residue D72 is the Proton acceptor of the active site.

Belongs to the Maf family. YceF subfamily. A divalent metal cation is required as a cofactor.

It localises to the cytoplasm. The enzyme catalyses N(7)-methyl-GTP + H2O = N(7)-methyl-GMP + diphosphate + H(+). Functionally, nucleoside triphosphate pyrophosphatase that hydrolyzes 7-methyl-GTP (m(7)GTP). May have a dual role in cell division arrest and in preventing the incorporation of modified nucleotides into cellular nucleic acids. The polypeptide is 7-methyl-GTP pyrophosphatase (Neisseria meningitidis serogroup A / serotype 4A (strain DSM 15465 / Z2491)).